Here is a 415-residue protein sequence, read N- to C-terminus: Calreticulin (415 aa).

The first 20 residues, 1-20 (MANPKSLSLFLLSLLAIASA), serve as a signal peptide directing secretion. A glycan (N-linked (GlcNAc...) asparagine) is linked at Asn-52. The cysteines at positions 106 and 138 are disulfide-linked. An alpha-D-glucoside contacts are provided by Tyr-110, Lys-112, Tyr-129, and Asp-136. Asn-152 carries N-linked (GlcNAc...) asparagine glycosylation. 7 repeat units span residues 192 to 203 (KQTGSLYTDWDL), 211 to 222 (DPEAKKPEDWDE), 228 to 239 (DPEDKKPEGYDD), 246 to 257 (DPDAKKPEDWDD), 261 to 271 (GEWTAPTIANP), 275 to 285 (GPWKPKKIKNP), and 289 to 299 (GKWKAPMIDNP). The tract at residues 192-257 (KQTGSLYTDW…DAKKPEDWDD (66 aa)) is 4 X approximate repeats. The span at 208–253 (KIKDPEAKKPEDWDEKEYIPDPEDKKPEGYDDIPKEIPDPDAKKPE) shows a compositional bias: basic and acidic residues. A disordered region spans residues 208–276 (KIKDPEAKKP…TIANPEYKGP (69 aa)). Residues 261–299 (GEWTAPTIANPEYKGPWKPKKIKNPNYKGKWKAPMIDNP) are 3 X approximate repeats. Glu-319 is an an alpha-D-glucoside binding site. A compositionally biased stretch (basic and acidic residues) spans 347–376 (ETWGKNKDAEKAAFEEAEKKKEEEESKDDP). A disordered region spans residues 347-415 (ETWGKNKDAE…DSAEDVHDEL (69 aa)). Acidic residues-rich tracts occupy residues 377-397 (ADSD…EDDG) and 404-415 (AEDSAEDVHDEL). The Prevents secretion from ER motif lies at 412–415 (HDEL).

The protein belongs to the calreticulin family.

The protein resides in the endoplasmic reticulum lumen. In terms of biological role, molecular calcium-binding chaperone promoting folding, oligomeric assembly and quality control in the ER via the calreticulin/calnexin cycle. This lectin may interact transiently with almost all of the monoglucosylated glycoproteins that are synthesized in the ER. The chain is Calreticulin from Ricinus communis (Castor bean).